Here is a 165-residue protein sequence, read N- to C-terminus: Endoribonuclease YbeY (165 aa).

Positions 130, 134, and 140 each coordinate Zn(2+).

The protein belongs to the endoribonuclease YbeY family. Requires Zn(2+) as cofactor.

Its subcellular location is the cytoplasm. Single strand-specific metallo-endoribonuclease involved in late-stage 70S ribosome quality control and in maturation of the 3' terminus of the 16S rRNA. This Streptococcus pyogenes serotype M28 (strain MGAS6180) protein is Endoribonuclease YbeY.